The primary structure comprises 75 residues: Putative defensin-like protein 126 (75 aa).

The signal sequence occupies residues 1–24; it reads MSKSTFLFVYIILILGSMVNEIQG. 4 disulfide bridges follow: cysteine 29–cysteine 73, cysteine 38–cysteine 57, cysteine 43–cysteine 67, and cysteine 47–cysteine 69.

The protein belongs to the DEFL family.

It is found in the secreted. The polypeptide is Putative defensin-like protein 126 (LCR6) (Arabidopsis thaliana (Mouse-ear cress)).